The following is an 886-amino-acid chain: Alanine--tRNA ligase (886 aa).

Zn(2+) is bound by residues His564, His568, Cys666, and His670.

This sequence belongs to the class-II aminoacyl-tRNA synthetase family. Zn(2+) is required as a cofactor.

The protein localises to the cytoplasm. It carries out the reaction tRNA(Ala) + L-alanine + ATP = L-alanyl-tRNA(Ala) + AMP + diphosphate. In terms of biological role, catalyzes the attachment of alanine to tRNA(Ala) in a two-step reaction: alanine is first activated by ATP to form Ala-AMP and then transferred to the acceptor end of tRNA(Ala). Also edits incorrectly charged Ser-tRNA(Ala) and Gly-tRNA(Ala) via its editing domain. The sequence is that of Alanine--tRNA ligase from Prochlorococcus marinus (strain MIT 9301).